Consider the following 405-residue polypeptide: Probable tRNA sulfurtransferase (405 aa).

A THUMP domain is found at 60–165; the sequence is EGVIERLRHV…QDAIYLTNQV (106 aa). Residues 183–184, 208–209, Arg-265, Gly-287, and Gln-296 each bind ATP; these read ML and HF.

This sequence belongs to the ThiI family.

It is found in the cytoplasm. It carries out the reaction [ThiI sulfur-carrier protein]-S-sulfanyl-L-cysteine + a uridine in tRNA + 2 reduced [2Fe-2S]-[ferredoxin] + ATP + H(+) = [ThiI sulfur-carrier protein]-L-cysteine + a 4-thiouridine in tRNA + 2 oxidized [2Fe-2S]-[ferredoxin] + AMP + diphosphate. It catalyses the reaction [ThiS sulfur-carrier protein]-C-terminal Gly-Gly-AMP + S-sulfanyl-L-cysteinyl-[cysteine desulfurase] + AH2 = [ThiS sulfur-carrier protein]-C-terminal-Gly-aminoethanethioate + L-cysteinyl-[cysteine desulfurase] + A + AMP + 2 H(+). It functions in the pathway cofactor biosynthesis; thiamine diphosphate biosynthesis. In terms of biological role, catalyzes the ATP-dependent transfer of a sulfur to tRNA to produce 4-thiouridine in position 8 of tRNAs, which functions as a near-UV photosensor. Also catalyzes the transfer of sulfur to the sulfur carrier protein ThiS, forming ThiS-thiocarboxylate. This is a step in the synthesis of thiazole, in the thiamine biosynthesis pathway. The sulfur is donated as persulfide by IscS. This chain is Probable tRNA sulfurtransferase, found in Latilactobacillus sakei subsp. sakei (strain 23K) (Lactobacillus sakei subsp. sakei).